An 845-amino-acid polypeptide reads, in one-letter code: Protein P (845 aa).

The terminal protein domain (TP) stretch occupies residues 1–179 (MPLSYQHFRK…FCGSPYSWEQ (179 aa)). Positions 180 to 348 (ELQHGRLVIK…YCLSHLVNLR (169 aa)) are spacer. The disordered stretch occupies residues 226-245 (GLQPHQGPLASSQPGRSGSI). Residues 349 to 692 (EDWGPCDEHG…YMNLYPVARQ (344 aa)) form a polymerase/reverse transcriptase domain (RT) region. Positions 359–602 (EHHIRIPRTP…YSLNFMGYII (244 aa)) constitute a Reverse transcriptase domain. Mg(2+) is bound by residues Asp-431, Asp-553, and Asp-554.

The protein belongs to the hepadnaviridae P protein family.

The catalysed reaction is DNA(n) + a 2'-deoxyribonucleoside 5'-triphosphate = DNA(n+1) + diphosphate. It catalyses the reaction Endonucleolytic cleavage to 5'-phosphomonoester.. Its activity is regulated as follows. Activated by host HSP70 and HSP40 in vitro to be able to bind the epsilon loop of the pgRNA. Because deletion of the RNase H region renders the protein partly chaperone-independent, the chaperones may be needed indirectly to relieve occlusion of the RNA-binding site by this domain. Inhibited by several reverse-transcriptase inhibitors: Lamivudine, Adefovir and Entecavir. Functionally, multifunctional enzyme that converts the viral RNA genome into dsDNA in viral cytoplasmic capsids. This enzyme displays a DNA polymerase activity that can copy either DNA or RNA templates, and a ribonuclease H (RNase H) activity that cleaves the RNA strand of RNA-DNA heteroduplexes in a partially processive 3'- to 5'-endonucleasic mode. Neo-synthesized pregenomic RNA (pgRNA) are encapsidated together with the P protein, and reverse-transcribed inside the nucleocapsid. Initiation of reverse-transcription occurs first by binding the epsilon loop on the pgRNA genome, and is initiated by protein priming, thereby the 5'-end of (-)DNA is covalently linked to P protein. Partial (+)DNA is synthesized from the (-)DNA template and generates the relaxed circular DNA (RC-DNA) genome. After budding and infection, the RC-DNA migrates in the nucleus, and is converted into a plasmid-like covalently closed circular DNA (cccDNA). The activity of P protein does not seem to be necessary for cccDNA generation, and is presumably released from (+)DNA by host nuclear DNA repair machinery. The protein is Protein P of Homo sapiens (Human).